Reading from the N-terminus, the 725-residue chain is Exocyst complex component 8 (725 aa).

S19 is subject to Phosphoserine. The interval 137–159 is disordered; that stretch reads AGFFSTPGGASRDGSGPGEEGKQ. At T142 the chain carries Phosphothreonine. The PH domain maps to 182-282; it reads YLVYNGDLVE…WLEVLEDTKR (101 aa). Residues 285–328 are disordered; that stretch reads SEKRRREQEEAAAPRGPPQVTSKATNPFEDDEEEEPAVPEVEEE. The span at 312 to 328 shows a compositional bias: acidic residues; the sequence is FEDDEEEEPAVPEVEEE.

This sequence belongs to the EXO84 family. As to quaternary structure, the exocyst complex is composed of EXOC1, EXOC2, EXOC3, EXOC4, EXOC5, EXOC6, EXOC7 and EXOC8. Interacts (via PH domain) with GTP-bound RALA and RALB. Interacts with SH3BP1; required for the localization of both SH3BP1 and the exocyst to the leading edge of migrating cells.

It is found in the cytoplasm. The protein resides in the perinuclear region. It localises to the cell projection. Its subcellular location is the growth cone. Component of the exocyst complex involved in the docking of exocytic vesicles with fusion sites on the plasma membrane. This is Exocyst complex component 8 (EXOC8) from Homo sapiens (Human).